We begin with the raw amino-acid sequence, 333 residues long: DNA-directed RNA polymerase subunit alpha (333 aa).

The tract at residues 1–239 (MSAVLDKGSL…TQARCFLNIA (239 aa)) is alpha N-terminal domain (alpha-NTD). An alpha C-terminal domain (alpha-CTD) region spans residues 259–333 (DASDLLSARI…SLGMNLDSHG (75 aa)).

Belongs to the RNA polymerase alpha chain family. Homodimer. The RNAP catalytic core consists of 2 alpha, 1 beta, 1 beta' and 1 omega subunit. When a sigma factor is associated with the core the holoenzyme is formed, which can initiate transcription.

The enzyme catalyses RNA(n) + a ribonucleoside 5'-triphosphate = RNA(n+1) + diphosphate. Its function is as follows. DNA-dependent RNA polymerase catalyzes the transcription of DNA into RNA using the four ribonucleoside triphosphates as substrates. This chain is DNA-directed RNA polymerase subunit alpha, found in Neorickettsia sennetsu (strain ATCC VR-367 / Miyayama) (Ehrlichia sennetsu).